We begin with the raw amino-acid sequence, 693 residues long: Cyclin-dependent kinase G-1 (693 aa).

Gly residues predominate over residues 1-10; it reads MAAGSHGGYR. Disordered stretches follow at residues 1-148 and 236-308; these read MAAG…ARDP and KKKK…DDYP. Residues 13–24 are compositionally biased toward basic and acidic residues; the sequence is EVAREREHDVGV. The span at 26–39 shows a compositional bias: basic residues; the sequence is RRSKEHYHHRHPSR. Basic and acidic residues-rich tracts occupy residues 40-54, 75-87, and 97-122; these read HRDS…RSGG, RPSE…REPG, and RSGE…EEAK. Residues 268 to 284 show a composition bias toward low complexity; it reads SVRSSSRSSDSGVLQGS. Over residues 287–304 the composition is skewed to basic and acidic residues; sequence RDLEVEKGDNIDVEKAAD. The region spanning 349 to 640 is the Protein kinase domain; it reads FERLNTINEG…AEDALNHEWF (292 aa). ATP contacts are provided by residues 355–363 and Lys378; that span reads INEGTYGVV. Position 359 is a phosphothreonine (Thr359). At Tyr360 the chain carries Phosphotyrosine. Asp473 (proton acceptor) is an active-site residue. Ser500 carries the phosphoserine modification. Position 506 is a phosphothreonine (Thr506). Residues 664 to 693 are disordered; sequence RFKKHMKSPDPLEEQWMKEQGNNGDRGLFG.

Belongs to the protein kinase superfamily. CMGC Ser/Thr protein kinase family. CDC2/CDKX subfamily.

It catalyses the reaction L-seryl-[protein] + ATP = O-phospho-L-seryl-[protein] + ADP + H(+). The catalysed reaction is L-threonyl-[protein] + ATP = O-phospho-L-threonyl-[protein] + ADP + H(+). It carries out the reaction [DNA-directed RNA polymerase] + ATP = phospho-[DNA-directed RNA polymerase] + ADP + H(+). This chain is Cyclin-dependent kinase G-1 (CDKG-1), found in Oryza sativa subsp. indica (Rice).